The chain runs to 194 residues: Histone H1.0 (194 aa).

Met1 is modified (N-acetylmethionine). A compositionally biased stretch (low complexity) spans 1-11 (MTENSTSAPAA). A disordered region spans residues 1-29 (MTENSTSAPAAKPKRAKASKKSTDHPKYS). An N-acetylthreonine; partial; in Histone H1.0, N-terminally processed modification is found at Thr2. A Deamidated asparagine; partial modification is found at Asn4. The region spanning 24–97 (DHPKYSDMIV…GASGSFRLAK (74 aa)) is the H15 domain. Residue Arg42 is modified to Citrulline. The segment at 84–194 (TKGVGASGSF…SSAKRAGKKK (111 aa)) is disordered. Residue Ser104 is modified to ADP-ribosylserine. Over residues 105–194 (VAFKKTKKEI…SSAKRAGKKK (90 aa)) the composition is skewed to basic residues.

The protein belongs to the histone H1/H5 family. Post-translationally, phosphorylated on Ser-17 in RNA edited version. ADP-ribosylated on Ser-104 in response to DNA damage.

Its subcellular location is the nucleus. It localises to the chromosome. Functionally, histones H1 are necessary for the condensation of nucleosome chains into higher-order structures. The histones H1.0 are found in cells that are in terminal stages of differentiation or that have low rates of cell division. The polypeptide is Histone H1.0 (Homo sapiens (Human)).